A 675-amino-acid polypeptide reads, in one-letter code: Nexilin (675 aa).

Positions 1-66 (MNDISQKAEI…RKEQYIRERE (66 aa)) are disordered. Lys-16 is subject to Phosphoserine. Residues 27–66 (GKGDVKDKFEAMQRAREERNQRRSRDEKQRRKEQYIRERE) are compositionally biased toward basic and acidic residues. Ser-80 bears the Phosphoserine mark. The interval 105–127 (RFAEMEKQRQEEQRKRTEEERKR) is disordered. Phosphoserine is present on Ser-241. Disordered stretches follow at residues 254 to 278 (LERQ…EEEK) and 313 to 336 (SFEE…ARRR). A phosphoserine mark is found at Ser-357 and Ser-365. Thr-370 is subject to Phosphothreonine. Disordered regions lie at residues 487-513 (ENFH…KVNM) and 551-584 (LQKK…APWF). Residues Ser-564 and Ser-569 each carry the phosphoserine modification. Positions 582–670 (PWFKKPLKNT…GSAASTCILT (89 aa)) constitute an Ig-like domain.

Interacts with F-actin. In terms of tissue distribution, abundantly expressed in heart and skeletal muscle, and at lower levels in placenta, lung, liver and pancreas. Also expressed in HeLaS3 and MOLT-4 cell lines.

The protein resides in the cytoplasm. The protein localises to the cytoskeleton. It is found in the cell junction. It localises to the adherens junction. Its subcellular location is the myofibril. The protein resides in the sarcomere. The protein localises to the z line. In terms of biological role, involved in regulating cell migration through association with the actin cytoskeleton. Has an essential role in the maintenance of Z line and sarcomere integrity. This is Nexilin from Homo sapiens (Human).